Reading from the N-terminus, the 433-residue chain is 23S rRNA (uracil(1939)-C(5))-methyltransferase RlmD (433 aa).

The TRAM domain maps to 10–68; sequence RTTTRQIITVSVNDLDSFGQGVARHNGKTLFIPGLLPQENAEVAVTEDKKQYARAKVVR. [4Fe-4S] cluster-binding residues include Cys-81, Cys-87, Cys-90, and Cys-162. Residues Gln-265, Phe-294, Asn-299, Glu-315, Asn-342, and Asp-363 each coordinate S-adenosyl-L-methionine. Cys-389 acts as the Nucleophile in catalysis.

Belongs to the class I-like SAM-binding methyltransferase superfamily. RNA M5U methyltransferase family. RlmD subfamily.

The catalysed reaction is uridine(1939) in 23S rRNA + S-adenosyl-L-methionine = 5-methyluridine(1939) in 23S rRNA + S-adenosyl-L-homocysteine + H(+). Functionally, catalyzes the formation of 5-methyl-uridine at position 1939 (m5U1939) in 23S rRNA. This Shigella flexneri protein is 23S rRNA (uracil(1939)-C(5))-methyltransferase RlmD.